Consider the following 211-residue polypeptide: Protein-L-isoaspartate O-methyltransferase (211 aa).

Residue Ser62 is part of the active site.

Belongs to the methyltransferase superfamily. L-isoaspartyl/D-aspartyl protein methyltransferase family.

Its subcellular location is the cytoplasm. It carries out the reaction [protein]-L-isoaspartate + S-adenosyl-L-methionine = [protein]-L-isoaspartate alpha-methyl ester + S-adenosyl-L-homocysteine. Catalyzes the methyl esterification of L-isoaspartyl residues in peptides and proteins that result from spontaneous decomposition of normal L-aspartyl and L-asparaginyl residues. It plays a role in the repair and/or degradation of damaged proteins. This is Protein-L-isoaspartate O-methyltransferase from Shewanella loihica (strain ATCC BAA-1088 / PV-4).